The sequence spans 270 residues: uncharacterized protein (270 aa).

Its function is as follows. Possibly involved in pGI2 replication mechanism. This is an uncharacterized protein from Bacillus thuringiensis.